Here is a 350-residue protein sequence, read N- to C-terminus: tRNA dimethylallyltransferase (350 aa).

34 to 41 (GPTASGKT) provides a ligand contact to ATP. 36 to 41 (TASGKT) serves as a coordination point for substrate. 3 interaction with substrate tRNA regions span residues 63–66 (DSAL), 187–191 (QRIQR), and 274–279 (RCVGYR).

It belongs to the IPP transferase family. Monomer. The cofactor is Mg(2+).

It carries out the reaction adenosine(37) in tRNA + dimethylallyl diphosphate = N(6)-dimethylallyladenosine(37) in tRNA + diphosphate. In terms of biological role, catalyzes the transfer of a dimethylallyl group onto the adenine at position 37 in tRNAs that read codons beginning with uridine, leading to the formation of N6-(dimethylallyl)adenosine (i(6)A). The protein is tRNA dimethylallyltransferase of Paracidovorax citrulli (strain AAC00-1) (Acidovorax citrulli).